A 413-amino-acid chain; its full sequence is Putative competence-damage inducible protein (413 aa).

It belongs to the CinA family.

This is Putative competence-damage inducible protein from Desulforudis audaxviator (strain MP104C).